We begin with the raw amino-acid sequence, 144 residues long: Large ribosomal subunit protein uL15 (144 aa).

The segment at 1-53 (MRLNSLSPAEGAKHSAKRLGRGIGSGLGKTGGRGHKGQKSRTGGGVRRGFEGG) is disordered. Residues 21–31 (RGIGSGLGKTG) are compositionally biased toward gly residues.

Belongs to the universal ribosomal protein uL15 family. Part of the 50S ribosomal subunit.

Functionally, binds to the 23S rRNA. The polypeptide is Large ribosomal subunit protein uL15 (Glaesserella parasuis serovar 5 (strain SH0165) (Haemophilus parasuis)).